A 244-amino-acid polypeptide reads, in one-letter code: Adenosylcobinamide-GDP ribazoletransferase (244 aa).

5 helical membrane-spanning segments follow: residues 33-53 (WFAVVGLLVGALVAALGWLGA), 57-77 (PWLAALLMLVTWVWVTGGLHL), 109-129 (FAVITLALQLLAKLVLLMLAV), 132-152 (GVGWSALVLLPAWARLGAVWW), and 176-196 (FWLSWLLLAALSAWLAPVLLL).

Belongs to the CobS family. Mg(2+) serves as cofactor.

It localises to the cell inner membrane. It catalyses the reaction alpha-ribazole + adenosylcob(III)inamide-GDP = adenosylcob(III)alamin + GMP + H(+). It carries out the reaction alpha-ribazole 5'-phosphate + adenosylcob(III)inamide-GDP = adenosylcob(III)alamin 5'-phosphate + GMP + H(+). Its pathway is cofactor biosynthesis; adenosylcobalamin biosynthesis; adenosylcobalamin from cob(II)yrinate a,c-diamide: step 7/7. Its function is as follows. Joins adenosylcobinamide-GDP and alpha-ribazole to generate adenosylcobalamin (Ado-cobalamin). Also synthesizes adenosylcobalamin 5'-phosphate from adenosylcobinamide-GDP and alpha-ribazole 5'-phosphate. The protein is Adenosylcobinamide-GDP ribazoletransferase of Laribacter hongkongensis (strain HLHK9).